A 494-amino-acid chain; its full sequence is Alpha-amylase-related protein (494 aa).

A signal peptide spans 1–20 (MFKFATAVILCLVAASSTLA). Pyrrolidone carboxylic acid is present on Gln-21. An intrachain disulfide couples Cys-48 to Cys-104. Ca(2+)-binding residues include Asn-118, Gln-169, and Asp-178. A disulfide bridge connects residues Cys-157 and Cys-171. A chloride-binding site is contributed by Arg-206. The Nucleophile role is filled by Asp-208. A Ca(2+)-binding site is contributed by His-212. Glu-245 (proton donor) is an active-site residue. The chloride site is built by Asn-308 and Arg-343. Cystine bridges form between Cys-376–Cys-382, Cys-418–Cys-441, and Cys-448–Cys-460.

It belongs to the glycosyl hydrolase 13 family. In terms of assembly, monomer. The cofactor is Ca(2+). Requires chloride as cofactor.

The protein resides in the secreted. The enzyme catalyses Endohydrolysis of (1-&gt;4)-alpha-D-glucosidic linkages in polysaccharides containing three or more (1-&gt;4)-alpha-linked D-glucose units.. The sequence is that of Alpha-amylase-related protein (Amyrel) from Drosophila bipectinata (Fruit fly).